Reading from the N-terminus, the 119-residue chain is Acidic phospholipase A2 natratoxin (119 aa).

7 cysteine pairs are disulfide-bonded: Cys-11-Cys-71, Cys-26-Cys-118, Cys-28-Cys-44, Cys-43-Cys-99, Cys-50-Cys-92, Cys-60-Cys-85, and Cys-78-Cys-90. Ca(2+) contacts are provided by Tyr-27, Gly-29, and Gly-31. Residue His-47 is part of the active site. Residue Asp-48 coordinates Ca(2+). Residue Asp-93 is part of the active site.

Belongs to the phospholipase A2 family. Group I subfamily. D49 sub-subfamily. Requires Ca(2+) as cofactor. In terms of tissue distribution, expressed by the venom gland.

It localises to the secreted. It carries out the reaction a 1,2-diacyl-sn-glycero-3-phosphocholine + H2O = a 1-acyl-sn-glycero-3-phosphocholine + a fatty acid + H(+). In terms of biological role, snake venom phospholipase A2 (PLA2) that has an effectively inhibitory effect on A-type K(+) currents (Kv/KCN) in acutely dissociated rat dorsal root ganglion (DRG) neurons. This inhibitory effect is independent of its enzymatic activity. PLA2 catalyzes the calcium-dependent hydrolysis of the 2-acyl groups in 3-sn-phosphoglycerides. The protein is Acidic phospholipase A2 natratoxin of Naja atra (Chinese cobra).